The primary structure comprises 331 residues: Holliday junction branch migration complex subunit RuvB (331 aa).

The tract at residues 1–171 (MTEPLDAALR…FGIIEHLEYY (171 aa)) is large ATPase domain (RuvB-L). ATP-binding positions include Leu9, Arg10, Gly51, Lys54, Thr55, Thr56, 118–120 (EDF), Arg161, Tyr171, and Arg208. Thr55 is a Mg(2+) binding site. A small ATPAse domain (RuvB-S) region spans residues 172 to 242 (TPEEIGTNLL…RAQDALDKLG (71 aa)). Residues 245-331 (TAGLDERDKK…AESDLGLYTN (87 aa)) are head domain (RuvB-H). The DNA site is built by Arg300 and Arg305.

The protein belongs to the RuvB family. In terms of assembly, homohexamer. Forms an RuvA(8)-RuvB(12)-Holliday junction (HJ) complex. HJ DNA is sandwiched between 2 RuvA tetramers; dsDNA enters through RuvA and exits via RuvB. An RuvB hexamer assembles on each DNA strand where it exits the tetramer. Each RuvB hexamer is contacted by two RuvA subunits (via domain III) on 2 adjacent RuvB subunits; this complex drives branch migration. In the full resolvosome a probable DNA-RuvA(4)-RuvB(12)-RuvC(2) complex forms which resolves the HJ.

Its subcellular location is the cytoplasm. The catalysed reaction is ATP + H2O = ADP + phosphate + H(+). Functionally, the RuvA-RuvB-RuvC complex processes Holliday junction (HJ) DNA during genetic recombination and DNA repair, while the RuvA-RuvB complex plays an important role in the rescue of blocked DNA replication forks via replication fork reversal (RFR). RuvA specifically binds to HJ cruciform DNA, conferring on it an open structure. The RuvB hexamer acts as an ATP-dependent pump, pulling dsDNA into and through the RuvAB complex. RuvB forms 2 homohexamers on either side of HJ DNA bound by 1 or 2 RuvA tetramers; 4 subunits per hexamer contact DNA at a time. Coordinated motions by a converter formed by DNA-disengaged RuvB subunits stimulates ATP hydrolysis and nucleotide exchange. Immobilization of the converter enables RuvB to convert the ATP-contained energy into a lever motion, pulling 2 nucleotides of DNA out of the RuvA tetramer per ATP hydrolyzed, thus driving DNA branch migration. The RuvB motors rotate together with the DNA substrate, which together with the progressing nucleotide cycle form the mechanistic basis for DNA recombination by continuous HJ branch migration. Branch migration allows RuvC to scan DNA until it finds its consensus sequence, where it cleaves and resolves cruciform DNA. This is Holliday junction branch migration complex subunit RuvB from Deinococcus geothermalis (strain DSM 11300 / CIP 105573 / AG-3a).